A 556-amino-acid chain; its full sequence is Putative cysteine ligase BshC (556 aa).

Coiled-coil stretches lie at residues 408–442 (ILQK…IAQA) and 468–513 (LGQV…ANLT).

It belongs to the BshC family.

In terms of biological role, involved in bacillithiol (BSH) biosynthesis. May catalyze the last step of the pathway, the addition of cysteine to glucosamine malate (GlcN-Mal) to generate BSH. The sequence is that of Putative cysteine ligase BshC from Symbiobacterium thermophilum (strain DSM 24528 / JCM 14929 / IAM 14863 / T).